The chain runs to 59 residues: Large ribosomal subunit protein uL30 (59 aa).

It belongs to the universal ribosomal protein uL30 family. As to quaternary structure, part of the 50S ribosomal subunit.

The protein is Large ribosomal subunit protein uL30 of Aeromonas hydrophila subsp. hydrophila (strain ATCC 7966 / DSM 30187 / BCRC 13018 / CCUG 14551 / JCM 1027 / KCTC 2358 / NCIMB 9240 / NCTC 8049).